The following is a 624-amino-acid chain: Actin-related protein 8 (624 aa).

Met-1 is modified (N-acetylmethionine). Positions 1–25 (MTQAEKGDAENGKEKGGEKEKEQRG) are enriched in basic and acidic residues. The disordered stretch occupies residues 1-29 (MTQAEKGDAENGKEKGGEKEKEQRGVKRP). The ATP site is built by Ser-55 and Thr-56. A Phosphoserine modification is found at Ser-132. 283 to 286 (DVGD) is an ATP binding site. Ser-412 carries the post-translational modification Phosphoserine. Residues 430-462 (SKQEQSAKATADRKSASKPIGFEGDLRGQSSDL) are disordered.

It belongs to the actin family. ARP8 subfamily. In terms of assembly, component of the chromatin remodeling INO80 complex; specifically part of a complex module associated with the DBINO domain of INO80. Exists as monomers and dimers, but the dimer is most probably the biologically relevant form required for stable interactions with histones that exploits the twofold symmetry of the nucleosome core.

The protein resides in the nucleus. The protein localises to the chromosome. Its function is as follows. Plays an important role in the functional organization of mitotic chromosomes. Exhibits low basal ATPase activity, and unable to polymerize. Proposed core component of the chromatin remodeling INO80 complex which is involved in transcriptional regulation, DNA replication and probably DNA repair. Required for the recruitment of INO80 (and probably the INO80 complex) to sites of DNA damage Strongly prefer nucleosomes and H3-H4 tetramers over H2A-H2B dimers, suggesting it may act as a nucleosome recognition module within the complex. In Mus musculus (Mouse), this protein is Actin-related protein 8 (Actr8).